A 421-amino-acid polypeptide reads, in one-letter code: 3-hydroxy-3-methylglutaryl-coenzyme A reductase (421 aa).

Catalysis depends on charge relay system residues Glu109, Lys240, and Asp315. His410 serves as the catalytic Proton donor.

The protein belongs to the HMG-CoA reductase family.

The catalysed reaction is (R)-mevalonate + 2 NADP(+) + CoA = (3S)-3-hydroxy-3-methylglutaryl-CoA + 2 NADPH + 2 H(+). Its pathway is metabolic intermediate biosynthesis; (R)-mevalonate biosynthesis; (R)-mevalonate from acetyl-CoA: step 3/3. Converts HMG-CoA to mevalonate. This chain is 3-hydroxy-3-methylglutaryl-coenzyme A reductase (hmgA), found in Aeropyrum pernix (strain ATCC 700893 / DSM 11879 / JCM 9820 / NBRC 100138 / K1).